Consider the following 175-residue polypeptide: Myosin regulatory light chain 2, atrial isoform (175 aa).

N-acetylalanine is present on Ala2. Phosphoserine occurs at positions 22 and 23. EF-hand domains follow at residues 32-67, 102-137, and 138-173; these read AQIQ…LGKV, DPEE…QADK, and FSPA…GDEK. Ca(2+)-binding residues include Asp45, Asn47, Asp49, and Asp56.

As to quaternary structure, myosin is a hexamer of 2 heavy chains and 4 light chains. As to expression, predominantly expressed in adult atrial muscle.

In Homo sapiens (Human), this protein is Myosin regulatory light chain 2, atrial isoform (MYL7).